A 920-amino-acid chain; its full sequence is Isoleucine--tRNA ligase (920 aa).

A 'HIGH' region motif is present at residues 57–67; that stretch reads PYANGDIHLGH. Position 560 (Glu-560) interacts with L-isoleucyl-5'-AMP. The 'KMSKS' region signature appears at 601–605; the sequence is KMSKS. An ATP-binding site is contributed by Lys-604. Positions 890, 893, 910, and 913 each coordinate Zn(2+).

Belongs to the class-I aminoacyl-tRNA synthetase family. IleS type 1 subfamily. As to quaternary structure, monomer. Requires Zn(2+) as cofactor.

It is found in the cytoplasm. It catalyses the reaction tRNA(Ile) + L-isoleucine + ATP = L-isoleucyl-tRNA(Ile) + AMP + diphosphate. Functionally, catalyzes the attachment of isoleucine to tRNA(Ile). As IleRS can inadvertently accommodate and process structurally similar amino acids such as valine, to avoid such errors it has two additional distinct tRNA(Ile)-dependent editing activities. One activity is designated as 'pretransfer' editing and involves the hydrolysis of activated Val-AMP. The other activity is designated 'posttransfer' editing and involves deacylation of mischarged Val-tRNA(Ile). This Caldicellulosiruptor bescii (strain ATCC BAA-1888 / DSM 6725 / KCTC 15123 / Z-1320) (Anaerocellum thermophilum) protein is Isoleucine--tRNA ligase.